A 187-amino-acid polypeptide reads, in one-letter code: Acireductone dioxygenase (187 aa).

H87, H89, E93, and H136 together coordinate Fe(2+). The Ni(2+) site is built by H87, H89, E93, and H136.

The protein belongs to the acireductone dioxygenase (ARD) family. The cofactor is Fe(2+). It depends on Ni(2+) as a cofactor.

The protein resides in the cytoplasm. The protein localises to the nucleus. The enzyme catalyses 1,2-dihydroxy-5-(methylsulfanyl)pent-1-en-3-one + O2 = 4-methylsulfanyl-2-oxobutanoate + formate + 2 H(+). The catalysed reaction is 1,2-dihydroxy-5-(methylsulfanyl)pent-1-en-3-one + O2 = 3-(methylsulfanyl)propanoate + CO + formate + 2 H(+). It functions in the pathway amino-acid biosynthesis; L-methionine biosynthesis via salvage pathway; L-methionine from S-methyl-5-thio-alpha-D-ribose 1-phosphate: step 5/6. In terms of biological role, catalyzes 2 different reactions between oxygen and the acireductone 1,2-dihydroxy-3-keto-5-methylthiopentene (DHK-MTPene) depending upon the metal bound in the active site. Fe-containing acireductone dioxygenase (Fe-ARD) produces formate and 2-keto-4-methylthiobutyrate (KMTB), the alpha-ketoacid precursor of methionine in the methionine recycle pathway. Ni-containing acireductone dioxygenase (Ni-ARD) produces methylthiopropionate, carbon monoxide and formate, and does not lie on the methionine recycle pathway. This chain is Acireductone dioxygenase, found in Cryptococcus neoformans var. neoformans serotype D (strain JEC21 / ATCC MYA-565) (Filobasidiella neoformans).